A 199-amino-acid polypeptide reads, in one-letter code: ATP-dependent Clp protease proteolytic subunit (199 aa).

Ser98 (nucleophile) is an active-site residue. His123 is an active-site residue.

Belongs to the peptidase S14 family. In terms of assembly, fourteen ClpP subunits assemble into 2 heptameric rings which stack back to back to give a disk-like structure with a central cavity, resembling the structure of eukaryotic proteasomes.

It is found in the cytoplasm. The catalysed reaction is Hydrolysis of proteins to small peptides in the presence of ATP and magnesium. alpha-casein is the usual test substrate. In the absence of ATP, only oligopeptides shorter than five residues are hydrolyzed (such as succinyl-Leu-Tyr-|-NHMec, and Leu-Tyr-Leu-|-Tyr-Trp, in which cleavage of the -Tyr-|-Leu- and -Tyr-|-Trp bonds also occurs).. Its function is as follows. Cleaves peptides in various proteins in a process that requires ATP hydrolysis. Has a chymotrypsin-like activity. Plays a major role in the degradation of misfolded proteins. This chain is ATP-dependent Clp protease proteolytic subunit, found in Clostridium botulinum (strain Eklund 17B / Type B).